Here is a 478-residue protein sequence, read N- to C-terminus: Probable cytosol aminopeptidase (478 aa).

Mn(2+) contacts are provided by Lys-244 and Asp-249. The active site involves Lys-256. Positions 267, 326, and 328 each coordinate Mn(2+). The active site involves Arg-330.

It belongs to the peptidase M17 family. The cofactor is Mn(2+).

The protein resides in the cytoplasm. The catalysed reaction is Release of an N-terminal amino acid, Xaa-|-Yaa-, in which Xaa is preferably Leu, but may be other amino acids including Pro although not Arg or Lys, and Yaa may be Pro. Amino acid amides and methyl esters are also readily hydrolyzed, but rates on arylamides are exceedingly low.. It catalyses the reaction Release of an N-terminal amino acid, preferentially leucine, but not glutamic or aspartic acids.. Presumably involved in the processing and regular turnover of intracellular proteins. Catalyzes the removal of unsubstituted N-terminal amino acids from various peptides. The sequence is that of Probable cytosol aminopeptidase from Fusobacterium nucleatum subsp. nucleatum (strain ATCC 25586 / DSM 15643 / BCRC 10681 / CIP 101130 / JCM 8532 / KCTC 2640 / LMG 13131 / VPI 4355).